A 382-amino-acid polypeptide reads, in one-letter code: Osmoprotectant import ATP-binding protein OsmV (382 aa).

The ABC transporter domain occupies 2–241; it reads IKLENLTKQF…PANEFVGSFV (240 aa). An ATP-binding site is contributed by 39–46; the sequence is GPSGCGKT. CBS domains lie at 258-320 and 322-373; these read VTDQ…THPF and ITGK…GRTR.

It belongs to the ABC transporter superfamily. The complex is composed of two ATP-binding proteins (OsmV), two transmembrane proteins (OsmW and OsmY) and a solute-binding protein (OsmX).

The protein localises to the cell inner membrane. In terms of biological role, part of the OsmU ABC transporter complex, which is involved in the uptake of osmoprotectants such as choline-O-sulfate and glycine betaine. Probably responsible for energy coupling to the transport system. The polypeptide is Osmoprotectant import ATP-binding protein OsmV (osmV) (Salmonella typhimurium (strain LT2 / SGSC1412 / ATCC 700720)).